We begin with the raw amino-acid sequence, 659 residues long: DNA ligase (659 aa).

NAD(+) contacts are provided by residues 31–35 (DFVYD), 80–81 (SL), and glutamate 109. Lysine 111 functions as the N6-AMP-lysine intermediate in the catalytic mechanism. NAD(+)-binding residues include arginine 132, glutamate 166, lysine 281, and lysine 305. Zn(2+) contacts are provided by cysteine 398, cysteine 401, cysteine 416, and cysteine 421. The BRCT domain occupies 581 to 659 (VTTHPFNGKT…EATFKVKINE (79 aa)).

The protein belongs to the NAD-dependent DNA ligase family. LigA subfamily. The cofactor is Mg(2+). Mn(2+) is required as a cofactor.

The catalysed reaction is NAD(+) + (deoxyribonucleotide)n-3'-hydroxyl + 5'-phospho-(deoxyribonucleotide)m = (deoxyribonucleotide)n+m + AMP + beta-nicotinamide D-nucleotide.. Functionally, DNA ligase that catalyzes the formation of phosphodiester linkages between 5'-phosphoryl and 3'-hydroxyl groups in double-stranded DNA using NAD as a coenzyme and as the energy source for the reaction. It is essential for DNA replication and repair of damaged DNA. The protein is DNA ligase of Acholeplasma laidlawii (strain PG-8A).